The following is a 553-amino-acid chain: Imidazole glycerol phosphate synthase hisHF (553 aa).

The 221-residue stretch at 3 to 223 folds into the Glutamine amidotransferase type-1 domain; the sequence is TVHLLDYVAG…QLHSVTLEDS (221 aa). Catalysis depends on for GATase activity residues C81, H194, and E196. The cyclase stretch occupies residues 232–553; the sequence is LTRRIIACLD…FLVRRFEPDV (322 aa). Catalysis depends on residues D241 and D403.

The protein in the C-terminal section; belongs to the HisA/HisF family.

The catalysed reaction is 5-[(5-phospho-1-deoxy-D-ribulos-1-ylimino)methylamino]-1-(5-phospho-beta-D-ribosyl)imidazole-4-carboxamide + L-glutamine = D-erythro-1-(imidazol-4-yl)glycerol 3-phosphate + 5-amino-1-(5-phospho-beta-D-ribosyl)imidazole-4-carboxamide + L-glutamate + H(+). It catalyses the reaction L-glutamine + H2O = L-glutamate + NH4(+). Its pathway is amino-acid biosynthesis; L-histidine biosynthesis; L-histidine from 5-phospho-alpha-D-ribose 1-diphosphate: step 5/9. IGPS catalyzes the conversion of PRFAR and glutamine to IGP, AICAR and glutamate. The glutaminase domain produces the ammonia necessary for the cyclase domain to produce IGP and AICAR from PRFAR. The ammonia is channeled to the active site of the cyclase domain. The polypeptide is Imidazole glycerol phosphate synthase hisHF (hisHF) (Emericella nidulans (strain FGSC A4 / ATCC 38163 / CBS 112.46 / NRRL 194 / M139) (Aspergillus nidulans)).